We begin with the raw amino-acid sequence, 277 residues long: Undecaprenyl-diphosphatase (277 aa).

Helical transmembrane passes span 3–23 (IALLIKAAIMGIVEGLTEFLP), 44–64 (AKVFDIAIQTGAIFAVILVYW), 82–102 (QFALNVLVAFVPAVVLGLLFG), 109–129 (LFTPVVVASAFIVGGFIILWA), 189–209 (TDFSFYLAIPTLIGAGAYSLF), 218–238 (ADAPMFGVGLLFSFLSAWLCI), and 253–273 (FAWYRIAFGIVVLATAWSGVV).

The protein belongs to the UppP family.

The protein resides in the cell inner membrane. The enzyme catalyses di-trans,octa-cis-undecaprenyl diphosphate + H2O = di-trans,octa-cis-undecaprenyl phosphate + phosphate + H(+). Functionally, catalyzes the dephosphorylation of undecaprenyl diphosphate (UPP). Confers resistance to bacitracin. This Polaromonas naphthalenivorans (strain CJ2) protein is Undecaprenyl-diphosphatase.